The sequence spans 496 residues: Solute carrier family 2, facilitated glucose transporter member 3 (496 aa).

Over 1-10 (MGTQKVTPAL) the chain is Cytoplasmic. A helical transmembrane segment spans residues 11–32 (IFAITVATIGSFQFGYNTGVIN). Topologically, residues 33–64 (APEKIIKEFINKTLTDKGNAPPSEVLLTSLWS) are extracellular. N-linked (GlcNAc...) asparagine glycosylation is present at Asn43. Residues 65–85 (LSVAIFSVGGMIGSFSVGLFV) form a helical membrane-spanning segment. Over 86 to 90 (NRFGR) the chain is Cytoplasmic. Residues 91 to 111 (RNSMLIVNLLAVTGGCFMGLC) form a helical membrane-spanning segment. The Extracellular segment spans residues 112 to 118 (KVAKSVE). Residues 119 to 142 (MLILGRLIIGLFCGLCTGFVPMYI) form a helical membrane-spanning segment. The Cytoplasmic portion of the chain corresponds to 143–153 (GEISPTALRGA). The chain crosses the membrane as a helical span at residues 154-174 (FGTLNQLGIVVGILVAQIFGL). D-glucose is bound at residue Gln159. The Extracellular segment spans residues 175 to 183 (EFILGSEEL). Residues 184 to 204 (WPLLLGFTILPTILQSAALPF) form a helical membrane-spanning segment. The Cytoplasmic segment spans residues 205 to 269 (CPESPRFLLI…LFRVSSYRQP (65 aa)). A Phosphothreonine modification is found at Thr232. The helical transmembrane segment at 270–290 (IIISIVLQLSQQLSGINAVFY) threads the bilayer. The interval 277-279 (QLS) is important for selectivity against fructose. D-glucose-binding positions include 280–281 (QQ) and Asn286. Topologically, residues 291–304 (YSTGIFKDAGVQEP) are extracellular. The helical transmembrane segment at 305-325 (IYATIGAGVVNTIFTVVSLFL) threads the bilayer. Asn315 lines the D-glucose pocket. At 326 to 331 (VERAGR) the chain is on the cytoplasmic side. A helical membrane pass occupies residues 332 to 352 (RTLHMIGLGGMAFCSTLMTVS). The Extracellular portion of the chain corresponds to 353-363 (LLLKDNYNGMS). The chain crosses the membrane as a helical span at residues 364-389 (FVCIGAILVFVAFFEIGPGPIPWFIV). Glu378 and Trp386 together coordinate D-glucose. Residues 390 to 399 (AELFSQGPRP) lie on the Cytoplasmic side of the membrane. A helical transmembrane segment spans residues 400 to 420 (AAMAVAGCSNWTSNFLVGLLF). Residues 421 to 429 (PSAAHYLGA) lie on the Extracellular side of the membrane. Residues 430–450 (YVFIIFTGFLITFLAFTFFKV) traverse the membrane as a helical segment. Over 451 to 496 (PETRGRTFEDITRAFEGQAHGADRSGKDGVMEVNSIEPAKETTTNV) the chain is Cytoplasmic. Residues Ser475 and Ser485 each carry the phosphoserine modification. The residue at position 492 (Thr492) is a Phosphothreonine.

This sequence belongs to the major facilitator superfamily. Sugar transporter (TC 2.A.1.1) family. Glucose transporter subfamily. In terms of assembly, interacts with SMIM43; the interaction may promote SLC2A3-mediated glucose transport to meet the energy needs of mesendoderm differentiation.

Its subcellular location is the cell membrane. It localises to the perikaryon. The protein resides in the cell projection. It carries out the reaction D-glucose(out) = D-glucose(in). The enzyme catalyses D-galactose(in) = D-galactose(out). Its activity is regulated as follows. Deoxyglucose transport is inhibited by D-glucose, D-galactose and maltose. Galactose transport is inhibited by D-glucose and maltose. In terms of biological role, facilitative glucose transporter. Can also mediate the uptake of various other monosaccharides across the cell membrane. Mediates the uptake of glucose, 2-deoxyglucose, galactose, mannose, xylose and fucose, and probably also dehydroascorbate. Does not mediate fructose transport. Required for mesendoderm differentiation. The protein is Solute carrier family 2, facilitated glucose transporter member 3 of Pongo abelii (Sumatran orangutan).